The sequence spans 333 residues: tRNA-dihydrouridine(16) synthase (333 aa).

Residues 19-21 (PMQ) and Q80 contribute to the FMN site. C110 serves as the catalytic Proton donor. FMN-binding positions include K151, 211–213 (NGD), and 235–236 (GR).

The protein belongs to the Dus family. DusC subfamily. Requires FMN as cofactor.

The enzyme catalyses 5,6-dihydrouridine(16) in tRNA + NADP(+) = uridine(16) in tRNA + NADPH + H(+). It carries out the reaction 5,6-dihydrouridine(16) in tRNA + NAD(+) = uridine(16) in tRNA + NADH + H(+). Catalyzes the synthesis of 5,6-dihydrouridine (D), a modified base found in the D-loop of most tRNAs, via the reduction of the C5-C6 double bond in target uridines. Specifically modifies U16 in tRNAs. The polypeptide is tRNA-dihydrouridine(16) synthase (Neisseria meningitidis serogroup B (strain ATCC BAA-335 / MC58)).